Reading from the N-terminus, the 185-residue chain is Ribosome-recycling factor (185 aa).

The protein belongs to the RRF family.

It localises to the cytoplasm. Responsible for the release of ribosomes from messenger RNA at the termination of protein biosynthesis. May increase the efficiency of translation by recycling ribosomes from one round of translation to another. The chain is Ribosome-recycling factor from Streptococcus pneumoniae (strain P1031).